Here is a 311-residue protein sequence, read N- to C-terminus: Probable manganese-dependent inorganic pyrophosphatase (311 aa).

Residues histidine 9, aspartate 13, aspartate 15, aspartate 77, histidine 99, and aspartate 151 each contribute to the Mn(2+) site.

It belongs to the PPase class C family. Requires Mn(2+) as cofactor.

The protein resides in the cytoplasm. It catalyses the reaction diphosphate + H2O = 2 phosphate + H(+). This Streptococcus pyogenes serotype M49 (strain NZ131) protein is Probable manganese-dependent inorganic pyrophosphatase.